The sequence spans 740 residues: Autotransporter adhesin BtaE (740 aa).

The N-terminal stretch at 1–11 (MFGLSVNHAYA) is a signal peptide. The interval 12–647 (GPGIFINDGT…LQTLDQANAY (636 aa)) is surface exposed passenger domain. The interval 648-686 (TDKKFGKLNEDIVATRIEARQAAAIGLAAASLRYDDRPG) is outer membrane translocation of the passenger domain. 4 beta stranded membrane-spanning segments follow: residues 686–696 (GKISAAIGGGF), 700–710 (EGAVALGLGHT), 719–725 (NLSAATS), and 728–739 (NWGMGAGFSYTF). Residues 687–740 (KISAAIGGGFWRGEGAVALGLGHTSEDQRMRSNLSAATSGGNWGMGAGFSYTFN) form a translocator domain region.

Belongs to the autotransporter-2 (AT-2) (TC 1.B.40) family. Homotrimer.

The protein localises to the cell surface. Its subcellular location is the cell outer membrane. Functionally, binds to hyaluronic acid and epithelial cells, and is required for full virulence in the mouse model. The polypeptide is Autotransporter adhesin BtaE (Brucella suis biovar 1 (strain 1330)).